Consider the following 539-residue polypeptide: Gamma-2-syntrophin (539 aa).

Residues 73–156 (TVTLRRQPVG…EVTITVEYLR (84 aa)) enclose the PDZ domain. 2 stretches are compositionally biased toward low complexity: residues 168–183 (SPGP…SSPL) and 194–205 (SSTTAPSSPSSP). The tract at residues 168-209 (SPGPSSDHSSGASSPLFDSGLHLNGNSSTTAPSSPSSPIAKD) is disordered. The 126-residue stretch at 296–421 (QVVHMGWVNE…WEKSFQRATF (126 aa)) folds into the PH domain.

Belongs to the syntrophin family. As to quaternary structure, interacts with the dystrophin protein DMD and related proteins DTNA and DTNB. Widely expressed. Strong expression in brain and testis. In CNS, it is expressed in the perikaryon and proximal portion of the neuronal processes. Strong expression in the hippocampus, neuron-rich dendate granule cells, and pyramidal cell layers. Highly expressed in neurons of the cerebral cortex. Also expressed in the cerebellar cortex, deep cerebellar nuclei, thalamus, and basal ganglia.

The protein localises to the cell membrane. It localises to the sarcolemma. The protein resides in the cytoplasm. It is found in the cytoskeleton. In terms of biological role, adapter protein that binds to and probably organizes the subcellular localization of a variety of proteins. May link various receptors to the actin cytoskeleton and the dystrophin glycoprotein complex. In Homo sapiens (Human), this protein is Gamma-2-syntrophin (SNTG2).